Consider the following 318-residue polypeptide: Protoheme IX farnesyltransferase (318 aa).

A run of 9 helical transmembrane segments spans residues 37 to 57 (VMEL…RGLP), 59 to 79 (IWLI…AGAF), 108 to 128 (EALV…WFGA), 131 to 151 (LAGL…TLIL), 158 to 178 (NIVW…AAVT), 183 to 203 (WPAI…YWPL), 216 to 238 (VPML…YTWA), 249 to 269 (LGHA…WFLL), and 296 to 316 (ISYL…GMPL).

It belongs to the UbiA prenyltransferase family. Protoheme IX farnesyltransferase subfamily.

The protein localises to the cell membrane. It carries out the reaction heme b + (2E,6E)-farnesyl diphosphate + H2O = Fe(II)-heme o + diphosphate. It participates in porphyrin-containing compound metabolism; heme O biosynthesis; heme O from protoheme: step 1/1. In terms of biological role, converts heme B (protoheme IX) to heme O by substitution of the vinyl group on carbon 2 of heme B porphyrin ring with a hydroxyethyl farnesyl side group. The protein is Protoheme IX farnesyltransferase of Renibacterium salmoninarum (strain ATCC 33209 / DSM 20767 / JCM 11484 / NBRC 15589 / NCIMB 2235).